Reading from the N-terminus, the 104-residue chain is Viral histone-like protein (104 aa).

The protein belongs to the bacterial histone-like protein family. Homodimer.

Its subcellular location is the virion. Stilbene derivatives SD1 and SD4 disrupt the binding between pA104R and DNA and inhibit the viral replication in primary alveolar macrophages. Its function is as follows. DNA-binding protein that plays a critical role in nucleoid compaction, genome replication and DNA replication and transcription. Binds to both ssDNA and dsDNA with a binding site covering about 15 nucleotides. Displays DNA-supercoiling activity only when associated with the viral DNA topoisomerase 2. The polypeptide is Viral histone-like protein (African swine fever virus (strain Badajoz 1971 Vero-adapted) (Ba71V)).